Here is a 711-residue protein sequence, read N- to C-terminus: Pentatricopeptide repeat-containing protein At5g46580, chloroplastic (711 aa).

The N-terminal 43 residues, 1–43 (MATVLTTAIDVCFNPQNSDTKKHSLFLKPSLFRQSRSRKLNIS), are a transit peptide targeting the chloroplast. PPR repeat units follow at residues 185 to 219 (ETIF…GVEL), 220 to 254 (DNIT…GLMP), 255 to 289 (DEVT…GWKP), 290 to 324 (DAIA…DVKP), 325 to 359 (NVVV…GLTP), 360 to 394 (NEKT…KWPM), 395 to 425 (DFIL…MKES), 431 to 465 (DNFS…GVQV), 466 to 500 (NVMG…GVKP), and 501 to 535 (DDRL…NKKL). A Smr domain is found at 614–696 (LDVRSLSVGA…IFVATKEDLV (83 aa)).

It belongs to the PPR family. P subfamily.

It localises to the plastid. Its subcellular location is the chloroplast. In Arabidopsis thaliana (Mouse-ear cress), this protein is Pentatricopeptide repeat-containing protein At5g46580, chloroplastic.